Here is a 513-residue protein sequence, read N- to C-terminus: Cytochrome P450 monooxygenase orf3 (513 aa).

A helical transmembrane segment spans residues 11 to 31 (LVALGLIAATIIIYSFTLTVY). Residues N211 and N351 are each glycosylated (N-linked (GlcNAc...) asparagine). C455 contacts heme.

The protein belongs to the cytochrome P450 family. Heme serves as cofactor.

It localises to the membrane. Its pathway is mycotoxin biosynthesis. Its function is as follows. Cytochrome P450 monooxygenase; part of the gene cluster that mediates the biosynthesis of brefeldin A (BFA), a protein transport inhibitor that shows antiviral, antifungal, and antitumor properties. The proposed biosynthesis of BFA involves formation of an acyclic polyketide chain that is differentially tailored throughout the backbone. The highly reducing polyketide synthase Bref-PKS is proposed to synthesize the precisely reduced octaketide precursor, which could then be directly offloaded by the thiohydrolase enzyme Bref-TH followed by a cytochrome P450 monooxygenase-mediated formation of the cyclopentane ring and macrocyclization to afford 7-deoxy BFA. Alternatively, the first ring annulation can also occur on the ACP-tethered intermediate before the thiohydrolase release and lactonization. The C7-hydroxylation by another cytochrome P450 monooxygenase is believed to be the final step in the process to obtain the final structure of BFA. In addition to the HRPKS Bref-PKS and the thiohydrolase Bref-TH, the brefeldin A biosynthesis cluster contains 4 cytochrome p450 monooxygenases (called orf3 to orf6), as well a the probable cluster-specific transcription regulator orf8. The protein is Cytochrome P450 monooxygenase orf3 of Eupenicillium brefeldianum (Penicillium brefeldianum).